A 224-amino-acid polypeptide reads, in one-letter code: LexA repressor (224 aa).

The H-T-H motif DNA-binding region spans 41 to 61 (MREIGDAVGLSSLSSVTHQLN). Active-site for autocatalytic cleavage activity residues include S148 and K185.

This sequence belongs to the peptidase S24 family. Homodimer.

The enzyme catalyses Hydrolysis of Ala-|-Gly bond in repressor LexA.. Functionally, represses a number of genes involved in the response to DNA damage (SOS response), including recA and lexA. In the presence of single-stranded DNA, RecA interacts with LexA causing an autocatalytic cleavage which disrupts the DNA-binding part of LexA, leading to derepression of the SOS regulon and eventually DNA repair. In Leifsonia xyli subsp. xyli (strain CTCB07), this protein is LexA repressor.